Here is a 191-residue protein sequence, read N- to C-terminus: Protein GrpE (191 aa).

Belongs to the GrpE family. As to quaternary structure, homodimer.

Its subcellular location is the cytoplasm. In terms of biological role, participates actively in the response to hyperosmotic and heat shock by preventing the aggregation of stress-denatured proteins, in association with DnaK and GrpE. It is the nucleotide exchange factor for DnaK and may function as a thermosensor. Unfolded proteins bind initially to DnaJ; upon interaction with the DnaJ-bound protein, DnaK hydrolyzes its bound ATP, resulting in the formation of a stable complex. GrpE releases ADP from DnaK; ATP binding to DnaK triggers the release of the substrate protein, thus completing the reaction cycle. Several rounds of ATP-dependent interactions between DnaJ, DnaK and GrpE are required for fully efficient folding. The chain is Protein GrpE from Listeria welshimeri serovar 6b (strain ATCC 35897 / DSM 20650 / CCUG 15529 / CIP 8149 / NCTC 11857 / SLCC 5334 / V8).